Here is a 538-residue protein sequence, read N- to C-terminus: Protein phosphatase EYA2 (538 aa).

The segment covering 209–230 has biased composition (polar residues); sequence HNVPNQSSESLAGEYNTHNGPS. A disordered region spans residues 209–263; the sequence is HNVPNQSSESLAGEYNTHNGPSTPAKEGDTDRPHRASDGKLRGRSKRSSDPSPAG. Residues 234–249 show a composition bias toward basic and acidic residues; the sequence is KEGDTDRPHRASDGKL. Aspartate 274 serves as the catalytic Nucleophile. Aspartate 274, aspartate 276, and aspartate 502 together coordinate Mg(2+). Aspartate 276 functions as the Proton donor in the catalytic mechanism.

It belongs to the HAD-like hydrolase superfamily. EYA family. In terms of assembly, interacts with DACH2 and SIX1, and probably with SIX2, SIX4 and SIX5. Interacts with CAPN8. Interacts with GNAZ and GNAI2; this precludes interaction with SIX1. The cofactor is Mg(2+). In terms of tissue distribution, highest expression in muscle with lower levels in kidney, placenta, pancreas, brain and heart.

The protein resides in the cytoplasm. Its subcellular location is the nucleus. The enzyme catalyses O-phospho-L-tyrosyl-[protein] + H2O = L-tyrosyl-[protein] + phosphate. Functionally, functions both as protein phosphatase and as transcriptional coactivator for SIX1, and probably also for SIX2, SIX4 and SIX5. Tyrosine phosphatase that dephosphorylates 'Tyr-142' of histone H2AX (H2AXY142ph) and promotes efficient DNA repair via the recruitment of DNA repair complexes containing MDC1. 'Tyr-142' phosphorylation of histone H2AX plays a central role in DNA repair and acts as a mark that distinguishes between apoptotic and repair responses to genotoxic stress. Its function as histone phosphatase may contribute to its function in transcription regulation during organogenesis. Plays an important role in hypaxial muscle development together with SIX1 and DACH2; in this it is functionally redundant with EYA1. In Homo sapiens (Human), this protein is Protein phosphatase EYA2 (EYA2).